Reading from the N-terminus, the 161-residue chain is MNLAISIALLLTVLQVSRGQKVTSLTACLVDQSLRLDCRHENTTSSPIQYEFSLTRETKKHVLFGTVGVPEHTYRSRTNFTSKYNMKVLYLSAFTXKDEGTYTCXLHHSGHSPPISSQNVTVLRDKLVKCEGISLLAQNTSWLXLLLLSLSLLQATDFMSL.

Positions 1-19 (MNLAISIALLLTVLQVSRG) are cleaved as a signal peptide. A Pyrrolidone carboxylic acid modification is found at glutamine 20. The region spanning 20-126 (QKVTSLTACL…SQNVTVLRDK (107 aa)) is the Ig-like V-type domain. 2 disulfides stabilise this stretch: cysteine 28/cysteine 130 and cysteine 38/cysteine 104. Residues asparagine 42 and asparagine 79 are each glycosylated (N-linked (GlcNAc...) asparagine). Phosphoserine is present on serine 82. Asparagine 119 carries N-linked (GlcNAc...) asparagine glycosylation. Cysteine 130 is lipidated: GPI-anchor amidated cysteine; alternate. A propeptide spans 131–161 (EGISLLAQNTSWLXLLLLSLSLLQATDFMSL) (removed in mature form). The N-linked (GlcNAc...) asparagine glycan is linked to asparagine 139.

The protein localises to the cell membrane. Functionally, may play a role in cell-cell or cell-ligand interactions during synaptogenesis and other events in the brain. The protein is Thy-1 membrane glycoprotein (THY1) of Macaca mulatta (Rhesus macaque).